Consider the following 461-residue polypeptide: Glycine--tRNA ligase (461 aa).

Arg100 and Glu163 together coordinate substrate. Residues 195 to 197 (RNE), 205 to 210 (FRTREF), 282 to 283 (EL), and 326 to 329 (GLGR) contribute to the ATP site. 210 to 214 (FEQME) is a binding site for substrate. 322–326 (EPAAG) serves as a coordination point for substrate.

This sequence belongs to the class-II aminoacyl-tRNA synthetase family. In terms of assembly, homodimer.

Its subcellular location is the cytoplasm. The catalysed reaction is tRNA(Gly) + glycine + ATP = glycyl-tRNA(Gly) + AMP + diphosphate. In terms of biological role, catalyzes the attachment of glycine to tRNA(Gly). In Corynebacterium glutamicum (strain ATCC 13032 / DSM 20300 / JCM 1318 / BCRC 11384 / CCUG 27702 / LMG 3730 / NBRC 12168 / NCIMB 10025 / NRRL B-2784 / 534), this protein is Glycine--tRNA ligase.